The primary structure comprises 361 residues: MAGNTIGQLFRVTTFGESHGLALGCIVDGVPPGIPLTEADLQHDLDRRRPGTSRYTTQRREPDQVKILSGVFEGVTTGTSIGLLIENTDQRSQDYSAIKDVFRPGHADYTYEQKYGLRDYRGGGRSSARETAMRVAAGAIAKKYLAEKFGIEIRGCLTQMGDIPLDIKDWSQVEQNPFFCPDPDKIDALDELMRALKKEGDSIGAKVTVVASGVPAGLGEPVFDRLDADIAHALMSINAVKGVEIGDGFDVVALRGSQNRDEITKDGFQSNHAGGILGGISSGQQIIAHMALKPTSSITVPGRTINRFGEEVEMITKGRHDPCVGIRAVPIAEAMLAIVLMDHLLRQRAQNADVKTDIPRW.

The NADP(+) site is built by arginine 48 and arginine 54. FMN contacts are provided by residues 125–127 (RSS), 238–239 (NA), glycine 278, 293–297 (KPTSS), and arginine 319.

This sequence belongs to the chorismate synthase family. In terms of assembly, homotetramer. FMNH2 is required as a cofactor.

The enzyme catalyses 5-O-(1-carboxyvinyl)-3-phosphoshikimate = chorismate + phosphate. Its pathway is metabolic intermediate biosynthesis; chorismate biosynthesis; chorismate from D-erythrose 4-phosphate and phosphoenolpyruvate: step 7/7. In terms of biological role, catalyzes the anti-1,4-elimination of the C-3 phosphate and the C-6 proR hydrogen from 5-enolpyruvylshikimate-3-phosphate (EPSP) to yield chorismate, which is the branch point compound that serves as the starting substrate for the three terminal pathways of aromatic amino acid biosynthesis. This reaction introduces a second double bond into the aromatic ring system. The chain is Chorismate synthase from Escherichia coli (strain K12 / MC4100 / BW2952).